A 184-amino-acid chain; its full sequence is Transcription termination/antitermination protein NusG (184 aa).

It belongs to the NusG family.

In terms of biological role, participates in transcription elongation, termination and antitermination. This chain is Transcription termination/antitermination protein NusG, found in Borreliella burgdorferi (strain ATCC 35210 / DSM 4680 / CIP 102532 / B31) (Borrelia burgdorferi).